Consider the following 390-residue polypeptide: Chorismate synthase 2 (390 aa).

The NADP(+) site is built by Arg39 and Arg45. Residues 132-134 (RSS), 253-254 (NA), Gly298, 313-317 (KPIPT), and Arg339 contribute to the FMN site.

Belongs to the chorismate synthase family. Homotetramer. It depends on FMNH2 as a cofactor.

It carries out the reaction 5-O-(1-carboxyvinyl)-3-phosphoshikimate = chorismate + phosphate. It participates in metabolic intermediate biosynthesis; chorismate biosynthesis; chorismate from D-erythrose 4-phosphate and phosphoenolpyruvate: step 7/7. Functionally, catalyzes the anti-1,4-elimination of the C-3 phosphate and the C-6 proR hydrogen from 5-enolpyruvylshikimate-3-phosphate (EPSP) to yield chorismate, which is the branch point compound that serves as the starting substrate for the three terminal pathways of aromatic amino acid biosynthesis. This reaction introduces a second double bond into the aromatic ring system. In Bacillus thuringiensis (strain Al Hakam), this protein is Chorismate synthase 2.